A 191-amino-acid polypeptide reads, in one-letter code: MEGQDDYQLLYEGRRSQPAAPPEEEEVSTLPRGRRQRGVEAGEGSAGREESRGHRRSQHRDRSAGGSMGSNVIGLPGVNPPTSEVVVMEPRSFDEMAQVIQYLRERKTVIMNLTLMDPAEAQRSVDFVAGGTYAIDGHQERIGENIFLFTPSTVMVSTPSSQVVQPLQRPLQSPTPLWPSTYEHLQAVGQH.

The disordered stretch occupies residues 1-77 (MEGQDDYQLL…MGSNVIGLPG (77 aa)).

The protein belongs to the SepF family. Homodimer. Interacts with FtsZ.

The protein resides in the cytoplasm. Its function is as follows. Cell division protein that is part of the divisome complex and is recruited early to the Z-ring. Probably stimulates Z-ring formation, perhaps through the cross-linking of FtsZ protofilaments. Its function overlaps with FtsA. This is Cell division protein SepF from Synechococcus sp. (strain JA-2-3B'a(2-13)) (Cyanobacteria bacterium Yellowstone B-Prime).